Reading from the N-terminus, the 279-residue chain is Diaminopimelate epimerase (279 aa).

Residues N13 and N66 each contribute to the substrate site. The active-site Proton donor is the C75. Residues 76–77 (GN), N162, N195, and 213–214 (ER) contribute to the substrate site. The active-site Proton acceptor is the C222. 223-224 (GT) serves as a coordination point for substrate.

It belongs to the diaminopimelate epimerase family. In terms of assembly, homodimer.

The protein localises to the cytoplasm. It catalyses the reaction (2S,6S)-2,6-diaminopimelate = meso-2,6-diaminopimelate. It participates in amino-acid biosynthesis; L-lysine biosynthesis via DAP pathway; DL-2,6-diaminopimelate from LL-2,6-diaminopimelate: step 1/1. In terms of biological role, catalyzes the stereoinversion of LL-2,6-diaminopimelate (L,L-DAP) to meso-diaminopimelate (meso-DAP), a precursor of L-lysine and an essential component of the bacterial peptidoglycan. The chain is Diaminopimelate epimerase from Synechocystis sp. (strain ATCC 27184 / PCC 6803 / Kazusa).